The chain runs to 621 residues: Lamin-C (621 aa).

The interval 1 to 47 (MSARRVTLNTRVSRASTSTPVGGASTSSRVGATSPTSPTRTSRQQEK) is disordered. The head stretch occupies residues 1-47 (MSARRVTLNTRVSRASTSTPVGGASTSSRVGATSPTSPTRTSRQQEK). Polar residues predominate over residues 7–31 (TLNTRVSRASTSTPVGGASTSSRVG). Over residues 33–42 (TSPTSPTRTS) the composition is skewed to low complexity. The residue at position 34 (serine 34) is a Phosphoserine. The region spanning 46–402 (EKEELQHLND…KLLCGEERRL (357 aa)) is the IF rod domain. Residues 47–85 (KEELQHLNDRLACYIDRMRNLENENSRLTQELNLAQDTV) form a coil 1A region. The tract at residues 86–95 (NRETSNLKAV) is linker 1. The tract at residues 96-233 (YEKELAAARK…QVHTQELTET (138 aa)) is coil 1B. Residues 234 to 257 (RSRRQIEISEIDGRLSRQYEAKLQ) form a linker 2 region. Positions 258 to 403 (QSLQELRDQY…LLCGEERRLN (146 aa)) are coil 2. Residues 404 to 458 (IESPGRPTTDSGISSNGSHLTASASSRSGRVTPSGRRSATPGISGSSAVKRRRTV) are disordered. A tail region spans residues 404–621 (IESPGRPTTD…GVRSLFSLLF (218 aa)). A phosphoserine mark is found at serine 406 and serine 441. Residues 409 to 450 (RPTTDSGISSNGSHLTASASSRSGRVTPSGRRSATPGISGSS) show a composition bias toward polar residues. At threonine 443 the chain carries Phosphothreonine. The Nuclear localization signal signature appears at 453 to 458 (KRRRTV). One can recognise an LTD domain in the interval 468 to 582 (SEYSVNAAAK…EDVASYDRVR (115 aa)). Residues 585–605 (VSSHTSRHRSSGTPSTGFTLG) are disordered.

It belongs to the intermediate filament family. As to quaternary structure, interacts with MAN1. In terms of tissue distribution, first detected from late stage 12 in the oenocytes, abdominal segments, hindgut and posterior spiracles, with expression increasing in stage 13 (at protein level). In stage 14, also becomes detectable in the foregut (at protein level). Stage 15 shows expression in the epidermis, dorsal longitudinal trunk, pharynx, esophagus and proventriculus, with the dorsal pharyngeal musculature showing expression in late stage 15 (at protein level). In stage 16 embryos, also detected in the exit glia with increasing expression in the somatic musculature (at protein level). Also detected in the visceral mesoderm but not in the midgut or central nervous system until the end of embryogenesis (at protein level). In third instar larvae, detectable at varying levels in all cell types (at protein level). Expressed in spermatocytes (at protein level).

It is found in the nucleus. The protein resides in the nucleus lamina. Its function is as follows. Lamins are components of the nuclear lamina, a fibrous layer on the nucleoplasmic side of the inner nuclear membrane, which is thought to provide a framework for the nuclear envelope and may also interact with chromatin. In spermatocytes, regulates cytokinesis during meiosis. This chain is Lamin-C (LamC), found in Drosophila melanogaster (Fruit fly).